A 221-amino-acid polypeptide reads, in one-letter code: 7-cyano-7-deazaguanine synthase (221 aa).

Residue 10 to 20 coordinates ATP; the sequence is FSGGQDSTTCL. 4 residues coordinate Zn(2+): Cys-186, Cys-195, Cys-198, and Cys-201.

The protein belongs to the QueC family. Homodimer. Requires Zn(2+) as cofactor.

The enzyme catalyses 7-carboxy-7-deazaguanine + NH4(+) + ATP = 7-cyano-7-deazaguanine + ADP + phosphate + H2O + H(+). It functions in the pathway purine metabolism; 7-cyano-7-deazaguanine biosynthesis. In terms of biological role, catalyzes the ATP-dependent conversion of 7-carboxy-7-deazaguanine (CDG) to 7-cyano-7-deazaguanine (preQ(0)). The polypeptide is 7-cyano-7-deazaguanine synthase (Anoxybacillus flavithermus (strain DSM 21510 / WK1)).